The following is a 216-amino-acid chain: MISFIKGVLIEKDPTALLIDVNGIGYEVFVPMTTFYTLGDIDSQVSLYTHFIVREDAQQLYGFKSKVDKKVFQELIKVNGIGARTAIAILSGMDSKTLLHCIENKDYALLATVPGIGKKTAERLVVEIYDKLLKMANEIYAQTSGTTTTSQDSQAQQAPTSVVLANSIFNESVDALLALGYKQKDAEKMARSAMGDATTAAEVIRKALQGSIKSKR.

Residues 1–64 (MISFIKGVLI…EDAQQLYGFK (64 aa)) are domain I. The interval 65–143 (SKVDKKVFQE…KMANEIYAQT (79 aa)) is domain II. Positions 144-163 (SGTTTTSQDSQAQQAPTSVV) are flexible linker. Positions 164–216 (LANSIFNESVDALLALGYKQKDAEKMARSAMGDATTAAEVIRKALQGSIKSKR) are domain III.

It belongs to the RuvA family. As to quaternary structure, homotetramer. Forms an RuvA(8)-RuvB(12)-Holliday junction (HJ) complex. HJ DNA is sandwiched between 2 RuvA tetramers; dsDNA enters through RuvA and exits via RuvB. An RuvB hexamer assembles on each DNA strand where it exits the tetramer. Each RuvB hexamer is contacted by two RuvA subunits (via domain III) on 2 adjacent RuvB subunits; this complex drives branch migration. In the full resolvosome a probable DNA-RuvA(4)-RuvB(12)-RuvC(2) complex forms which resolves the HJ.

It is found in the cytoplasm. In terms of biological role, the RuvA-RuvB-RuvC complex processes Holliday junction (HJ) DNA during genetic recombination and DNA repair, while the RuvA-RuvB complex plays an important role in the rescue of blocked DNA replication forks via replication fork reversal (RFR). RuvA specifically binds to HJ cruciform DNA, conferring on it an open structure. The RuvB hexamer acts as an ATP-dependent pump, pulling dsDNA into and through the RuvAB complex. HJ branch migration allows RuvC to scan DNA until it finds its consensus sequence, where it cleaves and resolves the cruciform DNA. The chain is Holliday junction branch migration complex subunit RuvA from Francisella tularensis subsp. tularensis (strain WY96-3418).